We begin with the raw amino-acid sequence, 424 residues long: GDP-fucose protein O-fucosyltransferase 2 (424 aa).

The signal sequence occupies residues 1-20; the sequence is MHFFPIQLLVLFFAEKIAFA. 51–55 serves as a coordination point for GDP-beta-L-fucose; the sequence is GEGFN. Catalysis depends on Glu52, which acts as the Proton acceptor. Cys154 and Cys187 are joined by a disulfide. Asn205 is a glycosylation site (N-linked (GlcNAc...) asparagine). GDP-beta-L-fucose-binding positions include 288–290, Asp366, and 383–384; these read HWR and TF. Cys407 and Cys414 are oxidised to a cystine.

The protein belongs to the glycosyltransferase 68 family. As to expression, expressed in the anterior part of embryos, in the hypodermal and neuronal cells of the head. Expressed at different levels in a variety of cell types after hatching, including neuronal, hypodermal, muscle, intestinal, and somatic gonadal cells. Expressed in the nerve ring around the pharynx, in dorsal and ventral nerve cords, intestine, and a variety of hypodermal cells of L1-L3 larvae. Expressed in gonadal sheath cells, spermatheca, and tissues surrounding the vulva of adult hermaphrodites, and in the body wall muscle and hypodermal cells of adults of both sexes.

The protein resides in the endoplasmic reticulum. Its subcellular location is the golgi apparatus. It carries out the reaction L-seryl-[protein] + GDP-beta-L-fucose = 3-O-(alpha-L-fucosyl)-L-seryl-[protein] + GDP + H(+). The enzyme catalyses L-threonyl-[protein] + GDP-beta-L-fucose = 3-O-(alpha-L-fucosyl)-L-threonyl-[protein] + GDP + H(+). Its pathway is protein modification; protein glycosylation. Functionally, catalyzes the reaction that attaches fucose through an O-glycosidic linkage to a conserved serine or threonine residue in the consensus sequence C1-X-X-S/T-C2 of thrombospondin type I repeats (TSRs) where C1 and C2 are the first and second cysteines of the repeat, respectively. O-fucosylates members of several protein families including the ADAMTS superfamily and the thrombospondin (TSP) and spondin families. In Caenorhabditis elegans, this protein is GDP-fucose protein O-fucosyltransferase 2 (pad-2).